A 185-amino-acid polypeptide reads, in one-letter code: dCTP deaminase (185 aa).

DCTP is bound at residue 107–112 (KSTYAR). Catalysis depends on Glu133, which acts as the Proton donor/acceptor. Residues Gln152, Tyr166, and Gln176 each coordinate dCTP.

Belongs to the dCTP deaminase family. As to quaternary structure, homotrimer.

It carries out the reaction dCTP + H2O + H(+) = dUTP + NH4(+). The protein operates within pyrimidine metabolism; dUMP biosynthesis; dUMP from dCTP (dUTP route): step 1/2. Catalyzes the deamination of dCTP to dUTP. This is dCTP deaminase from Nitratiruptor sp. (strain SB155-2).